Reading from the N-terminus, the 400-residue chain is MKKSINEQKTIFIILLSNIFVAFLGIGLIIPVMPSFMKIMHLSGSTMGYLVAAFAISQLITSPFAGRWVDRFGRKKMIILGLLIFSLSELIFGLGTHVSIFYFSRILGGVSAAFIMPAVTAYVADITTLKERSKAMGYVSAAISTGFIIGPGAGGFIAGFGIRMPFFFASAIALIAAVTSVFILKESLSIEERHQLSSHTKESNFIKDLKRSIHPVYFIAFIIVFVMAFGLSAYETVFSLFSDHKFGFTPKDIAAIITISSIVAVVIQVLLFGKLVNKLGEKRMIQLCLITGAILAFVSTVMSGFLTVLLVTCFIFLAFDLLRPALTAHLSNMAGNQQGFVAGMNSTYTSLGNIFGPALGGILFDLNIHYPFLFAGFVMIVGLGLTMVWKEKKNDAAALN.

11 helical membrane passes run 11–31 (IFIILLSNIFVAFLGIGLIIP), 46–66 (TMGYLVAAFAISQLITSPFAG), 78–98 (IILGLLIFSLSELIFGLGTHV), 106–126 (ILGGVSAAFIMPAVTAYVADI), 142–162 (AISTGFIIGPGAGGFIAGFGI), 164–184 (MPFFFASAIALIAAVTSVFIL), 213–233 (IHPVYFIAFIIVFVMAFGLSA), 253–273 (IAAIITISSIVAVVIQVLLFG), 297–317 (FVSTVMSGFLTVLLVTCFIFL), 346–366 (STYTSLGNIFGPALGGILFDL), and 368–388 (IHYPFLFAGFVMIVGLGLTMV).

It belongs to the major facilitator superfamily. TCR/Tet family.

Its subcellular location is the cell membrane. Functionally, energy-dependent efflux pump responsible for decreased drug accumulation in multi-drug-resistant cells. Probably uses a transmembrane proton gradient as the energy source. Causes the efflux of a variety of toxic substances, including such structurally diverse compounds as ethidium bromide, rhodamine and acridine dyes, tetraphenylphosphonium, puromycin, chloramphenicol, doxorubicin, and fluoroquinolone antibiotics. The polypeptide is Multidrug resistance protein 2 (blt) (Bacillus subtilis (strain 168)).